Here is a 78-residue protein sequence, read N- to C-terminus: Antitoxin VapB2 (78 aa).

Residues 4-44 enclose the SpoVT-AbrB domain; sequence AKIFMNGQSQAVRLPKEFRFSVKEVSVIPLGKGIVLQPLPN.

The protein belongs to the VapB family. In terms of assembly, forms complexes with VapC2; probably VapC2(4):VapB2(2) in the absence of DNA, and VapC2(4):VapB2(4) in the presence of DNA. Crystallizes as heterodimers with stoichiometry VapC2(4):VapB2(4) in the presence of its probable promoter DNA. The heterodimers are in contact via alternative VapC-VapC and VapB-VapB interactions. This subunit contacts DNA.

Functionally, antitoxin component of a type II toxin-antitoxin (TA) system. Upon expression in E.coli or S.cerevisiae neutralizes the effect of cognate toxin VapC2, partially inhibits the RNase activity of VapC2. In Rickettsia felis (strain ATCC VR-1525 / URRWXCal2) (Rickettsia azadi), this protein is Antitoxin VapB2 (vapB2).